Consider the following 1493-residue polypeptide: Son of sevenless homolog (1493 aa).

In terms of domain architecture, DH spans 244–448; sequence TYESVAVDFL…ERVVGCVSDM (205 aa). Residues 496–606 enclose the PH domain; sequence ELEKDGDLGM…WMAVLVKVTT (111 aa). Positions 656–824 constitute an N-terminal Ras-GEF domain; sequence GIPVIKCGTV…TILALIEKRV (169 aa). The Ras-GEF domain maps to 897–1164; that stretch reads HPIEIGRQLT…YNKSLEIQPK (268 aa). 3 disordered regions span residues 1067 to 1091, 1165 to 1248, and 1263 to 1493; these read KSPP…DPEN, GLDT…DDAP, and HPKI…SSNK. Residues 1079-1088 are compositionally biased toward basic and acidic residues; that stretch reads QQKDDLKASD. Polar residues-rich tracts occupy residues 1208-1231 and 1279-1289; these read HSQN…NTPL and SRANQSNSVSL. Over residues 1308–1326 the composition is skewed to low complexity; the sequence is STATSPTTLTTTTTPSSAG. Positions 1350-1361 are enriched in polar residues; sequence LTPSRDNSSPSA. Residues 1381 to 1400 are compositionally biased toward low complexity; that stretch reads STSSDVSSSPSTSGSTSSAT. The segment covering 1402-1417 has biased composition (basic and acidic residues); the sequence is ENQEQLRVIFDREESH. A compositionally biased stretch (pro residues) spans 1426-1435; it reads PLPPALPPPR. The segment covering 1453 to 1464 has biased composition (polar residues); the sequence is HNSNSPTLSSEQ.

Interacts with cmd-1 in the presence of Ca(2+).

Promotes the exchange of Ras-bound GDP by GTP. May regulate signaling pathways downstream of receptor tyrosine kinase, egl-15 and let-23. Required for larval and male spicule development, fluid homeostasis, vulva induction, spermatogenesis, and oogenesis by promoting meiosis prophase exit during oocyte maturation. Required for the delamination of G1 cell by promoting the loss of cell junctions and detachment from the excretory system during larval development. Plays a role in nicotinic acetylcholine receptor (nAChR)-mediated sensitivity to nicotine. Regulates synaptic levels of nAchR subunit lev-1 in the nerve cord. The polypeptide is Son of sevenless homolog (Caenorhabditis elegans).